Consider the following 547-residue polypeptide: CTP synthase (547 aa).

An amidoligase domain region spans residues 1-265; that stretch reads MARYVFITGG…DQAVLDAFGI (265 aa). S13 lines the CTP pocket. UTP is bound at residue S13. ATP-binding positions include 14-19 and D71; that span reads SLGKGL. 2 residues coordinate Mg(2+): D71 and E139. CTP-binding positions include 146–148, 186–191, and K222; these read DIE and KTKPTQ. UTP is bound by residues 186–191 and K222; that span reads KTKPTQ. Residues 291–546 form the Glutamine amidotransferase type-1 domain; that stretch reads RVAIVGKYTQ…IRAAVEVSRL (256 aa). An L-glutamine-binding site is contributed by G353. The active-site Nucleophile; for glutamine hydrolysis is C380. L-glutamine is bound by residues 381–384, E404, and R474; that span reads LGMQ. Residues H519 and E521 contribute to the active site.

It belongs to the CTP synthase family. Homotetramer.

The enzyme catalyses UTP + L-glutamine + ATP + H2O = CTP + L-glutamate + ADP + phosphate + 2 H(+). The catalysed reaction is L-glutamine + H2O = L-glutamate + NH4(+). It catalyses the reaction UTP + NH4(+) + ATP = CTP + ADP + phosphate + 2 H(+). Its pathway is pyrimidine metabolism; CTP biosynthesis via de novo pathway; CTP from UDP: step 2/2. Its activity is regulated as follows. Allosterically activated by GTP, when glutamine is the substrate; GTP has no effect on the reaction when ammonia is the substrate. The allosteric effector GTP functions by stabilizing the protein conformation that binds the tetrahedral intermediate(s) formed during glutamine hydrolysis. Inhibited by the product CTP, via allosteric rather than competitive inhibition. Its function is as follows. Catalyzes the ATP-dependent amination of UTP to CTP with either L-glutamine or ammonia as the source of nitrogen. Regulates intracellular CTP levels through interactions with the four ribonucleotide triphosphates. This is CTP synthase from Cereibacter sphaeroides (strain ATCC 17025 / ATH 2.4.3) (Rhodobacter sphaeroides).